We begin with the raw amino-acid sequence, 222 residues long: Charged multivesicular body protein 4b (222 aa).

Disordered regions lie at residues 1–21 (MSLI…PSPQ) and 177–222 (NLLE…WATA). Residues 21–182 (QEAIQKLRDT…ELDKNLLEVQ (162 aa)) adopt a coiled-coil conformation.

Belongs to the SNF7 family. Probable core component of the endosomal sorting required for transport complex III (ESCRT-III). ESCRT-III components are thought to multimerize to form a flat lattice on the perimeter membrane of the endosome.

The protein resides in the cytoplasm. It localises to the cytosol. The protein localises to the late endosome membrane. It is found in the midbody. In terms of biological role, probable core component of the endosomal sorting required for transport complex III (ESCRT-III) which is involved in multivesicular bodies (MVBs) formation and sorting of endosomal cargo proteins into MVBs. MVBs contain intraluminal vesicles (ILVs) that are generated by invagination and scission from the limiting membrane of the endosome and mostly are delivered to lysosomes enabling degradation of membrane proteins, such as stimulated growth factor receptors, lysosomal enzymes and lipids. This Xenopus laevis (African clawed frog) protein is Charged multivesicular body protein 4b (chmp4b).